A 166-amino-acid polypeptide reads, in one-letter code: SsrA-binding protein (166 aa).

Residues 143–166 (HDKREDDKRKQANRDMKSALARYR) form a disordered region. Residues 144–159 (DKREDDKRKQANRDMK) are compositionally biased toward basic and acidic residues.

Belongs to the SmpB family.

It is found in the cytoplasm. Functionally, required for rescue of stalled ribosomes mediated by trans-translation. Binds to transfer-messenger RNA (tmRNA), required for stable association of tmRNA with ribosomes. tmRNA and SmpB together mimic tRNA shape, replacing the anticodon stem-loop with SmpB. tmRNA is encoded by the ssrA gene; the 2 termini fold to resemble tRNA(Ala) and it encodes a 'tag peptide', a short internal open reading frame. During trans-translation Ala-aminoacylated tmRNA acts like a tRNA, entering the A-site of stalled ribosomes, displacing the stalled mRNA. The ribosome then switches to translate the ORF on the tmRNA; the nascent peptide is terminated with the 'tag peptide' encoded by the tmRNA and targeted for degradation. The ribosome is freed to recommence translation, which seems to be the essential function of trans-translation. This Prochlorococcus marinus (strain MIT 9211) protein is SsrA-binding protein.